The chain runs to 471 residues: UDP-N-acetylmuramate--L-alanine ligase (471 aa).

Position 114–120 (114–120 (GTHGKTT)) interacts with ATP.

It belongs to the MurCDEF family.

It localises to the cytoplasm. The catalysed reaction is UDP-N-acetyl-alpha-D-muramate + L-alanine + ATP = UDP-N-acetyl-alpha-D-muramoyl-L-alanine + ADP + phosphate + H(+). It functions in the pathway cell wall biogenesis; peptidoglycan biosynthesis. Cell wall formation. The polypeptide is UDP-N-acetylmuramate--L-alanine ligase (Sinorhizobium medicae (strain WSM419) (Ensifer medicae)).